A 408-amino-acid polypeptide reads, in one-letter code: 1-deoxy-D-xylulose 5-phosphate reductoisomerase (408 aa).

NADPH-binding residues include T19, G20, S21, I22, G45, N47, and N130. K131 is a binding site for 1-deoxy-D-xylulose 5-phosphate. E132 is a binding site for NADPH. Residue D156 coordinates Mn(2+). Residues S157, E158, S182, and H205 each contribute to the 1-deoxy-D-xylulose 5-phosphate site. Residue E158 participates in Mn(2+) binding. G211 is an NADPH binding site. 1-deoxy-D-xylulose 5-phosphate-binding residues include S218, N223, K224, and E227. E227 lines the Mn(2+) pocket.

The protein belongs to the DXR family. Requires Mg(2+) as cofactor. It depends on Mn(2+) as a cofactor.

The catalysed reaction is 2-C-methyl-D-erythritol 4-phosphate + NADP(+) = 1-deoxy-D-xylulose 5-phosphate + NADPH + H(+). Its pathway is isoprenoid biosynthesis; isopentenyl diphosphate biosynthesis via DXP pathway; isopentenyl diphosphate from 1-deoxy-D-xylulose 5-phosphate: step 1/6. In terms of biological role, catalyzes the NADPH-dependent rearrangement and reduction of 1-deoxy-D-xylulose-5-phosphate (DXP) to 2-C-methyl-D-erythritol 4-phosphate (MEP). The protein is 1-deoxy-D-xylulose 5-phosphate reductoisomerase of Gluconobacter oxydans (strain 621H) (Gluconobacter suboxydans).